A 294-amino-acid chain; its full sequence is MKHSSLRRSLLLAGITLPLVSFALPAWANALPASVDKQLAELERNANGRLGVAMINTGNGTKILYRAAQRFPFCSTFKFMLAAAVLDQSQSQPNLLNKHINYHESDLLSYAPITRKNLAHGMTVSELCAATIQYSDNTAANLLIKELGGLAAVNQFARSIGDQMFRLDRWEPDLNTARPNDPRDTTTPAAMAASMNKLVLGDALRPAQRSQLAVWLKGNTTGDATIRAGAPTDWIVGDKTGSGDYGTTNDIAVLWPTKGAPIVLVVYFTQREKDAKPRRDVLASVTKIILSQIS.

The signal sequence occupies residues 1 to 30 (MKHSSLRRSLLLAGITLPLVSFALPAWANA). Catalysis depends on serine 75, which acts as the Acyl-ester intermediate. 239–241 (KTG) is a substrate binding site.

This sequence belongs to the class-A beta-lactamase family.

The catalysed reaction is a beta-lactam + H2O = a substituted beta-amino acid. The polypeptide is Beta-lactamase (blaA) (Yersinia enterocolitica).